We begin with the raw amino-acid sequence, 893 residues long: Translation initiation factor IF-2 (893 aa).

Disordered stretches follow at residues 51-203 (KEHG…AEAE) and 216-299 (EENE…TSMQ). Basic and acidic residues-rich tracts occupy residues 102–203 (ALEE…AEAE), 216–238 (EENE…DADY), and 245–261 (HARE…EQQP). A tr-type G domain is found at 392 to 561 (GRAPVVTIMG…LLQSEVLELT (170 aa)). Residues 401-408 (GHVDHGKT) are G1. Position 401–408 (401–408 (GHVDHGKT)) interacts with GTP. A G2 region spans residues 426–430 (GITQH). A G3 region spans residues 447 to 450 (DTPG). Residues 447-451 (DTPGH) and 501-504 (NKID) contribute to the GTP site. The tract at residues 501–504 (NKID) is G4. The interval 537 to 539 (SAK) is G5.

It belongs to the TRAFAC class translation factor GTPase superfamily. Classic translation factor GTPase family. IF-2 subfamily.

The protein resides in the cytoplasm. In terms of biological role, one of the essential components for the initiation of protein synthesis. Protects formylmethionyl-tRNA from spontaneous hydrolysis and promotes its binding to the 30S ribosomal subunits. Also involved in the hydrolysis of GTP during the formation of the 70S ribosomal complex. In Aliivibrio fischeri (strain ATCC 700601 / ES114) (Vibrio fischeri), this protein is Translation initiation factor IF-2.